We begin with the raw amino-acid sequence, 253 residues long: 5'-nucleotidase SurE (253 aa).

The a divalent metal cation site is built by D8, D9, S39, and N95.

This sequence belongs to the SurE nucleotidase family. Requires a divalent metal cation as cofactor.

It localises to the cytoplasm. It carries out the reaction a ribonucleoside 5'-phosphate + H2O = a ribonucleoside + phosphate. Its function is as follows. Nucleotidase that shows phosphatase activity on nucleoside 5'-monophosphates. In Clostridium beijerinckii (strain ATCC 51743 / NCIMB 8052) (Clostridium acetobutylicum), this protein is 5'-nucleotidase SurE.